A 223-amino-acid polypeptide reads, in one-letter code: Urease subunit alpha (223 aa).

A urease gamma region spans residues 1-101 (MHFTQQQLQR…LVTIHEPIAN (101 aa)). The tract at residues 102–223 (DDKIKAGEIF…LSKAKEKGFL (122 aa)) is urease beta.

The protein in the N-terminal section; belongs to the urease gamma subunit family. It in the C-terminal section; belongs to the urease beta subunit family. As to quaternary structure, heterohexamer of 3 UreA (alpha) and 3 UreB (beta) subunits.

It localises to the cytoplasm. The catalysed reaction is urea + 2 H2O + H(+) = hydrogencarbonate + 2 NH4(+). The protein operates within nitrogen metabolism; urea degradation; CO(2) and NH(3) from urea (urease route): step 1/1. In Campylobacter lari, this protein is Urease subunit alpha.